Here is a 121-residue protein sequence, read N- to C-terminus: Large ribosomal subunit protein bL19 (121 aa).

It belongs to the bacterial ribosomal protein bL19 family.

This protein is located at the 30S-50S ribosomal subunit interface and may play a role in the structure and function of the aminoacyl-tRNA binding site. This chain is Large ribosomal subunit protein bL19, found in Chlorobaculum tepidum (strain ATCC 49652 / DSM 12025 / NBRC 103806 / TLS) (Chlorobium tepidum).